The sequence spans 457 residues: Acetylcholine receptor subunit alpha (457 aa).

Residues 1–20 (MEPRPLLLLLGLCSAGLVLG) form the signal peptide. The Extracellular portion of the chain corresponds to 21-230 (SEHETRLVAK…ITYHFVMQRL (210 aa)). Cystine bridges form between C148-C162 and C212-C213. Residue N161 is glycosylated (N-linked (GlcNAc...) asparagine). The next 3 helical transmembrane spans lie at 231-255 (PLYFIVNVIIPCLLFSFLTGLVFYL), 263-281 (MTLSISVLLSLTVFLLVIV), and 297-316 (YMLFTMVFVIASIIITVIVI). The Cytoplasmic segment spans residues 317 to 428 (NTHHRSPSTH…WKYVAMVMDH (112 aa)). Residues 429–447 (ILLAVFMLVCIIGTLAVFA) form a helical membrane-spanning segment.

Belongs to the ligand-gated ion channel (TC 1.A.9) family. Acetylcholine receptor (TC 1.A.9.1) subfamily. Alpha-1/CHRNA1 sub-subfamily. One of the alpha chains that assemble within the acetylcholine receptor, a pentamer of two alpha chains, a beta, a delta, and a gamma (in immature muscle) or epsilon (in mature muscle) chains. The muscle heteropentamer composed of alpha-1, beta-1, delta, epsilon subunits interacts with the alpha-conotoxin ImII.

It is found in the postsynaptic cell membrane. The protein localises to the cell membrane. It carries out the reaction K(+)(in) = K(+)(out). It catalyses the reaction Na(+)(in) = Na(+)(out). Its function is as follows. Upon acetylcholine binding, the AChR responds by an extensive change in conformation that affects all subunits and leads to opening of an ion-conducting channel across the plasma membrane. This is Acetylcholine receptor subunit alpha (CHRNA1) from Bos taurus (Bovine).